Consider the following 411-residue polypeptide: Diels-Alderase ffsF (411 aa).

The signal sequence occupies residues 1 to 17; sequence MTQIKLLLLSLAITAQS.

It belongs to the Diels-Alderase family.

It participates in mycotoxin biosynthesis. Diels-Alderase; part of the gene cluster that mediates the biosynthesis of the cytotoxic leucine-containing cytochalasans, including aspochalasin C, aspochalasin E, TMC-169, flavichalasine F, aspergillin PZ, aspochalasin M and flavichalasine G. The first step in the pathway is catalyzed by the hybrid PKS-NRPS ffsA that utilizes 8 units of malonyl-CoA to iteratively assemble the octaketide chain before addition of L-leucine by the C-terminal NRPS modules. Because ffsA lacks a designated enoylreductase (ER) domain, the required activity is provided the enoyl reductase fssC. The methyltransferase (MT) domain of ffsA catalyzes the alpha-methylation at C10 and C14 using S-adenosyl-L-methionine as the methyl-donating cosubstrate. Reduction by the hydrolyase ffsE, followed by dehydration and intra-molecular Diels-Alder cyclization by the Diels-Alderase ffsF then yield the required isoindolone-fused macrocycle. A number of oxidative steps catalyzed by the tailoring cytochrome P450 monooxygenase ffsD, the FAD-linked oxidoreductase ffsJ and the short-chain dehydrogenase/reductase ffsI, are further required to afford the final products. This Aspergillus flavipes protein is Diels-Alderase ffsF.